Reading from the N-terminus, the 107-residue chain is Putative double-stranded DNA mimic protein CGSHiGG_01135 (107 aa).

It belongs to the putative dsDNA mimic protein family.

Functionally, may act as a double-stranded DNA (dsDNA) mimic. Probably regulates the activity of a dsDNA-binding protein. The polypeptide is Putative double-stranded DNA mimic protein CGSHiGG_01135 (Haemophilus influenzae (strain PittGG)).